A 660-amino-acid chain; its full sequence is Probable E3 ubiquitin ligase complex SCF subunit sconB (660 aa).

A compositionally biased stretch (basic and acidic residues) spans 1–13 (MHNENSVLRDAKE). Disordered stretches follow at residues 1 to 34 (MHNE…MTPY) and 86 to 108 (LGTG…RRQA). Residues 175 to 221 (IDFITALPPEISFKILSYLDTASLCRAAQVSRGWKCLADDDVVWHRM) enclose the F-box domain. 7 WD repeats span residues 340 to 379 (GHTN…RTLT), 381 to 419 (HTSG…STYT), 421 to 457 (HLGG…TFLL), 459 to 500 (GHSD…RTFQ), 542 to 586 (SQVS…CLRT), 587 to 626 (FFGH…CERT), and 629 to 660 (GHSG…SFKN). Positions 521-553 (GHDASHEEDSNASVSGDESPSSQVSCSPTAAFF) are disordered. The span at 531 to 548 (NASVSGDESPSSQVSCSP) shows a compositional bias: polar residues.

The protein belongs to the WD repeat MET30/SCONB/SCON-2 family. In terms of assembly, component of the SCF(sconB) E3 ubiquitin ligase complex.

It participates in protein modification; protein ubiquitination. Its function is as follows. Component of the SCF(sconB) E3 ubiquitin ligase complex involved in the regulation of sulfur metabolite repression, probably by mediating the inactivation or degradation of the metR transcription factor. This chain is Probable E3 ubiquitin ligase complex SCF subunit sconB (sconB), found in Talaromyces marneffei (strain ATCC 18224 / CBS 334.59 / QM 7333) (Penicillium marneffei).